Reading from the N-terminus, the 164-residue chain is uncharacterized protein (164 aa).

The disordered stretch occupies residues 1–77 (MGQKKTMGTE…PCSIRDAPFH (77 aa)).

This is an uncharacterized protein from Homo sapiens (Human).